We begin with the raw amino-acid sequence, 236 residues long: tRNA (guanine-N(1)-)-methyltransferase (236 aa).

S-adenosyl-L-methionine-binding positions include Gly-114 and 134–139; that span reads IGDYIL.

It belongs to the RNA methyltransferase TrmD family. Homodimer.

Its subcellular location is the cytoplasm. It catalyses the reaction guanosine(37) in tRNA + S-adenosyl-L-methionine = N(1)-methylguanosine(37) in tRNA + S-adenosyl-L-homocysteine + H(+). Functionally, specifically methylates guanosine-37 in various tRNAs. This is tRNA (guanine-N(1)-)-methyltransferase from Wolbachia pipientis wMel.